The primary structure comprises 431 residues: Protein farnesyltransferase subunit beta (431 aa).

PFTB repeat units follow at residues 130–171 (KRKI…SLCD), 182–224 (RKGI…TLLN), 231–273 (TEGV…AILR), 280–322 (VEKL…AILE), and 332–375 (KHAL…AVAE). Residues 258–261 (HGGY) and 301–304 (RSNK) contribute to the (2E,6E)-farnesyl diphosphate site. Positions 307 and 309 each coordinate Zn(2+). 310-313 (YSFW) provides a ligand contact to (2E,6E)-farnesyl diphosphate. Histidine 363 contributes to the Zn(2+) binding site.

Belongs to the protein prenyltransferase subunit beta family. Heterodimer of an alpha (RAM2) and a beta (RAM1) subunit. The cofactor is Zn(2+).

The protein localises to the cytoplasm. The enzyme catalyses L-cysteinyl-[protein] + (2E,6E)-farnesyl diphosphate = S-(2E,6E)-farnesyl-L-cysteinyl-[protein] + diphosphate. Functionally, catalyzes the transfer of a farnesyl moiety from farnesyl diphosphate to a cysteine at the fourth position from the C-terminus of several proteins having the C-terminal sequence Cys-aliphatic-aliphatic-X where X is Ser, Ala, Met, Cys, or Gln. Required for the membrane localization of proteins such as a-factor, Ras proteins and other membrane proteins containing the C-terminal CAAX motif. The beta subunit is responsible for isoprenoid and peptide-binding. This Saccharomyces cerevisiae (strain ATCC 204508 / S288c) (Baker's yeast) protein is Protein farnesyltransferase subunit beta.